The following is an 885-amino-acid chain: GPI ethanolamine phosphate transferase 2 (885 aa).

Asparagine 82, asparagine 155, and asparagine 194 each carry an N-linked (GlcNAc...) asparagine glycan. Residues aspartate 413 to asparagine 433 traverse the membrane as a helical segment. N-linked (GlcNAc...) asparagine glycosylation occurs at asparagine 443. The next 3 membrane-spanning stretches (helical) occupy residues valine 447–isoleucine 467, isoleucine 473–phenylalanine 493, and serine 495–serine 514. An N-linked (GlcNAc...) asparagine glycan is attached at asparagine 516. Transmembrane regions (helical) follow at residues leucine 539 to glycine 559, glycine 581 to leucine 601, isoleucine 648 to isoleucine 668, glutamate 697 to tyrosine 717, tyrosine 726 to glycine 746, valine 768 to leucine 788, isoleucine 820 to valine 840, and serine 865 to phenylalanine 885.

The protein belongs to the PIGG/PIGN/PIGO family. PIGG subfamily.

It localises to the endoplasmic reticulum membrane. Its pathway is glycolipid biosynthesis; glycosylphosphatidylinositol-anchor biosynthesis. In terms of biological role, ethanolamine phosphate transferase involved in glycosylphosphatidylinositol-anchor biosynthesis. Transfers ethanolamine phosphate to the GPI second mannose. The protein is GPI ethanolamine phosphate transferase 2 (GPI7) of Candida albicans (strain SC5314 / ATCC MYA-2876) (Yeast).